The sequence spans 662 residues: DCC-interacting protein 13-beta (662 aa).

The required for RAB5A binding stretch occupies residues M1–V428. The BAR domain occupies A3 to V268. A PH domain is found at L277 to R375. A PID domain is found at S486–D635. Residues N642 to A662 are disordered.

In terms of assembly, homodimer. Homotetramer. Binds RAB5A/Rab5 through an N-terminal domain. This interaction is essential for its recruitment to endosomal membranes as well as its role in cell proliferation. Binds subunits of the NuRD/MeCP1 complex. Interacts with FSHR; interaction is independent of follicle stimulating hormone stimulation. Interacts with APPL1; the interaction is decreased by adiponectin in a time-dependent manner. Forms a complex comprising APPL1, RUVBL2, CTNNB1, HDAC1 and HDAC2; interaction reduces interaction between CTNNB1, HDAC1, HDAC2 and RUVBL2 leading to the decrease of deacetylase activity of this complex; affects the recruitment of repressive complexes to the Wnt target genes. Interacts (via BAR domain) with TBC1D1; interaction is dependent of TBC1D1 phosphorylation at 'Ser-235'; interaction diminishes the phosphorylation of TBC1D1 at 'Thr-596', resulting in inhibition of SLC2A4 translocation and glucose uptake. Interacts with ANXA2; targets APPL2 to endosomes and acting in parallel to RAB5A. Interacts with RAB31 (in GTP-bound form); interaction contributes to or enhances recruitment of APPL2 to the phagosomes; interaction enhances Fc-gamma receptor-mediated phagocytosis through PI3K/Akt signaling in macrophages. Interacts with PIK3R1; forms a complex with PIK3R1 and APPL1. Interacts (via BAR domain) with ADIPOR1; hinders the accessibility of APPL1 to ADIPOR1; negatively regulates adiponectin signaling; ADIPOQ dissociates this interaction and facilitates the recruitment of APPL1 to ADIPOR1. Interacts (via BAR domain) with ADIPOR2; ADIPOQ dissociates this interaction. As to expression, expressed in insulin-target tissues including skeletal muscle, liver, fat, and brain. Highly expressed in kidney and pancreas. Abundantly expressed in the ventromedial hypothalamus (VMH), barely detectable in the arcuate nucleus (ARC) and paraventricular nucleus (PVN) of the hypothalamus. Also expressed in pancreatic beta-cells.

It localises to the early endosome membrane. The protein resides in the nucleus. It is found in the cell membrane. The protein localises to the endosome membrane. Its subcellular location is the cytoplasm. It localises to the cytoplasmic vesicle. The protein resides in the phagosome. It is found in the cell projection. The protein localises to the ruffle. Its subcellular location is the ruffle membrane. It localises to the phagosome membrane. Functionally, multifunctional adapter protein that binds to various membrane receptors, nuclear factors and signaling proteins to regulate many processes, such as cell proliferation, immune response, endosomal trafficking and cell metabolism. Regulates signaling pathway leading to cell proliferation through interaction with RAB5A and subunits of the NuRD/MeCP1 complex. Plays a role in immune response by modulating phagocytosis, inflammatory and innate immune responses. In macrophages, enhances Fc-gamma receptor-mediated phagocytosis through interaction with RAB31 leading to activation of PI3K/Akt signaling. In response to LPS, modulates inflammatory responses by playing a key role on the regulation of TLR4 signaling and in the nuclear translocation of RELA/NF-kappa-B p65 and the secretion of pro- and anti-inflammatory cytokines. Also functions as a negative regulator of innate immune response via inhibition of AKT1 signaling pathway by forming a complex with APPL1 and PIK3R1. Plays a role in endosomal trafficking of TGFBR1 from the endosomes to the nucleus. Plays a role in cell metabolism by regulating adiponectin and insulin signaling pathways and adaptative thermogenesis. In muscle, negatively regulates adiponectin-simulated glucose uptake and fatty acid oxidation by inhibiting adiponectin signaling pathway through APPL1 sequestration thereby antagonizing APPL1 action. In muscles, negatively regulates insulin-induced plasma membrane recruitment of GLUT4 and glucose uptake through interaction with TBC1D1. Plays a role in cold and diet-induced adaptive thermogenesis by activating ventromedial hypothalamus (VMH) neurons throught AMPK inhibition which enhances sympathetic outflow to subcutaneous white adipose tissue (sWAT), sWAT beiging and cold tolerance. Also plays a role in other signaling pathways namely Wnt/beta-catenin, HGF and glucocorticoid receptor signaling. Positive regulator of beta-catenin/TCF-dependent transcription through direct interaction with RUVBL2/reptin resulting in the relief of RUVBL2-mediated repression of beta-catenin/TCF target genes by modulating the interactions within the beta-catenin-reptin-HDAC complex. May affect adult neurogenesis in hippocampus and olfactory system via regulating the sensitivity of glucocorticoid receptor. Required for fibroblast migration through HGF cell signaling. This Mus musculus (Mouse) protein is DCC-interacting protein 13-beta.